The chain runs to 917 residues: DNA topoisomerase 1 beta (917 aa).

The disordered stretch occupies residues 1 to 368 (MATEAFVKPV…SLPSGDGQKK (368 aa)). Residues 32–63 (RNSNTAATTNRPSPINNAMRNSAIGSTKSSPP) show a composition bias toward polar residues. Over residues 66-82 (SPLTSPNRSASSSTRSS) the composition is skewed to low complexity. Residues 89–100 (PSSSSVQRSTLK) show a composition bias toward polar residues. Composition is skewed to basic and acidic residues over residues 102-116 (PLRDDRSVVAKERNG) and 134-149 (DKPLSARLKLDSKEVT). Residues 150-170 (KQPSSSGRGSTQQAVQKSNMR) are compositionally biased toward polar residues. Positions 177–187 (YTKKKVLDERA) are enriched in basic and acidic residues. Over residues 189–205 (MSSTVQTKTSVGTSSSK) the composition is skewed to polar residues. Composition is skewed to basic and acidic residues over residues 256–265 (KLSEPARPVK) and 296–307 (VKEDNSDGDDHV). At serine 301 the chain carries Phosphoserine. Over residues 316–338 (DSSNNKSSSAKPSSSKMIASSSR) the composition is skewed to low complexity. Interaction with DNA stretches follow at residues 575 to 576 (KY), 638 to 643 (RAGNEK), and 729 to 731 (TAK). Residues 582-912 (SSSLKGQSDK…MDVDPEFRFC (331 aa)) form the Topo IB-type catalytic domain. Residues 779–858 (VSKSHGAQVE…ERDMQTKEDM (80 aa)) are a coiled coil. Residue tyrosine 870 is the O-(3'-phospho-DNA)-tyrosine intermediate of the active site.

This sequence belongs to the type IB topoisomerase family.

It localises to the nucleus. It carries out the reaction ATP-independent breakage of single-stranded DNA, followed by passage and rejoining.. Releases the supercoiling and torsional tension of DNA introduced during the DNA replication and transcription by transiently cleaving and rejoining one strand of the DNA duplex. Introduces a single-strand break via transesterification at a target site in duplex DNA. The scissile phosphodiester is attacked by the catalytic tyrosine of the enzyme, resulting in the formation of a DNA-(3'-phosphotyrosyl)-enzyme intermediate and the expulsion of a 5'-OH DNA strand. The free DNA strand then rotates around the intact phosphodiester bond on the opposing strand, thus removing DNA supercoils. Finally, in the religation step, the DNA 5'-OH attacks the covalent intermediate to expel the active-site tyrosine and restore the DNA phosphodiester backbone. Topoisomerases 1 enzymes (TOP1A and TOP1B) are essential for plant survival. This chain is DNA topoisomerase 1 beta, found in Arabidopsis thaliana (Mouse-ear cress).